We begin with the raw amino-acid sequence, 294 residues long: Nucleotide-binding protein Reut_A0350 (294 aa).

An ATP-binding site is contributed by 8-15 (GISGSGKS). GTP is bound at residue 57-60 (DIRS).

Belongs to the RapZ-like family.

In terms of biological role, displays ATPase and GTPase activities. This is Nucleotide-binding protein Reut_A0350 from Cupriavidus pinatubonensis (strain JMP 134 / LMG 1197) (Cupriavidus necator (strain JMP 134)).